The following is a 173-amino-acid chain: Translation initiation factor IF-3 (173 aa).

Belongs to the IF-3 family. As to quaternary structure, monomer.

It is found in the cytoplasm. Functionally, IF-3 binds to the 30S ribosomal subunit and shifts the equilibrium between 70S ribosomes and their 50S and 30S subunits in favor of the free subunits, thus enhancing the availability of 30S subunits on which protein synthesis initiation begins. The protein is Translation initiation factor IF-3 of Neisseria gonorrhoeae (strain ATCC 700825 / FA 1090).